We begin with the raw amino-acid sequence, 943 residues long: Protein translocase subunit SecA (943 aa).

ATP contacts are provided by residues Gln-90, 108–112 (GEGKT), and Asp-509. A disordered region spans residues 535–560 (PNNEHKPPIPKQRSSKSKGGFSSKVG). The span at 551–560 (SKGGFSSKVG) shows a compositional bias: low complexity.

It belongs to the SecA family. In terms of assembly, monomer and homodimer. Part of the essential Sec protein translocation apparatus which comprises SecA, SecYEG and auxiliary proteins SecDF. Other proteins may also be involved.

The protein resides in the cell inner membrane. It is found in the cellular thylakoid membrane. It localises to the cytoplasm. The enzyme catalyses ATP + H2O + cellular proteinSide 1 = ADP + phosphate + cellular proteinSide 2.. Its function is as follows. Part of the Sec protein translocase complex. Interacts with the SecYEG preprotein conducting channel. Has a central role in coupling the hydrolysis of ATP to the transfer of proteins into and across the cell membrane, serving as an ATP-driven molecular motor driving the stepwise translocation of polypeptide chains across the membrane. Probably participates in protein translocation into and across both the cytoplasmic and thylakoid membranes in cyanobacterial cells. This chain is Protein translocase subunit SecA, found in Prochlorococcus marinus (strain MIT 9312).